Here is a 356-residue protein sequence, read N- to C-terminus: Non-functional pseudokinase ZRK15 (356 aa).

Positions Asn-62–Leu-356 constitute a Protein kinase domain. ATP-binding positions include Phe-68 to Tyr-76 and Lys-94.

It belongs to the protein kinase superfamily. Ser/Thr protein kinase family. ZRK subfamily. In terms of assembly, interacts with RPP13L4/ZAR1.

This Arabidopsis thaliana (Mouse-ear cress) protein is Non-functional pseudokinase ZRK15.